Here is a 237-residue protein sequence, read N- to C-terminus: Flagellar L-ring protein (237 aa).

The signal sequence occupies residues 1–24; that stretch reads MNRPGFPRFSVLIASLCGITLLSG. Residue C25 is the site of N-palmitoyl cysteine attachment. C25 carries S-diacylglycerol cysteine lipidation.

This sequence belongs to the FlgH family. In terms of assembly, the basal body constitutes a major portion of the flagellar organelle and consists of four rings (L,P,S, and M) mounted on a central rod.

The protein localises to the cell outer membrane. The protein resides in the bacterial flagellum basal body. Functionally, assembles around the rod to form the L-ring and probably protects the motor/basal body from shearing forces during rotation. This chain is Flagellar L-ring protein, found in Pseudomonas syringae pv. tomato (strain ATCC BAA-871 / DC3000).